Reading from the N-terminus, the 131-residue chain is UPF0102 protein YraN (131 aa).

The segment covering 1-19 (MATVPTRSGSPRQLTTKQT) has biased composition (polar residues). A disordered region spans residues 1–21 (MATVPTRSGSPRQLTTKQTGD).

The protein belongs to the UPF0102 family.

This Escherichia coli O7:K1 (strain IAI39 / ExPEC) protein is UPF0102 protein YraN.